Here is a 349-residue protein sequence, read N- to C-terminus: Isopentenyl-diphosphate delta-isomerase (349 aa).

7 to 8 (RK) contributes to the substrate binding site. FMN is bound by residues S65, 66-68 (SMT), S96, and N124. 96–98 (SQR) is a substrate binding site. Q159 is a binding site for substrate. E160 serves as a coordination point for Mg(2+). FMN contacts are provided by residues K191, T221, 271–273 (GIR), and 292–293 (AA).

It belongs to the IPP isomerase type 2 family. As to quaternary structure, homooctamer. Dimer of tetramers. FMN serves as cofactor. The cofactor is NADPH. Requires Mg(2+) as cofactor.

It localises to the cytoplasm. The enzyme catalyses isopentenyl diphosphate = dimethylallyl diphosphate. Its function is as follows. Involved in the biosynthesis of isoprenoids. Catalyzes the 1,3-allylic rearrangement of the homoallylic substrate isopentenyl (IPP) to its allylic isomer, dimethylallyl diphosphate (DMAPP). This chain is Isopentenyl-diphosphate delta-isomerase, found in Synechocystis sp. (strain ATCC 27184 / PCC 6803 / Kazusa).